An 837-amino-acid polypeptide reads, in one-letter code: Intestinal mucin-like protein (837 aa).

4 repeat units span residues 17-27 (PSTPSTPPPST), 28-38 (PTTPTSSQTTT), 39-50 (PSTPSTTSSKST), and 51-62 (PSTPQSTSSKST). Residues 17–70 (PSTPSTPPPSTPTTPTSSQTTTPSTPSTTSSKSTPSTPQSTSSKSTPSTPPKTT) are 5 X 11 AA approximate tandem repeats. The disordered stretch occupies residues 17–75 (PSTPSTPPPSTPTTPTSSQTTTPSTPSTTSSKSTPSTPQSTSSKSTPSTPPKTTLPGCL). Positions 29–70 (TTPTSSQTTTPSTPSTTSSKSTPSTPQSTSSKSTPSTPPKTT) are enriched in low complexity. A 5; truncated repeat occupies 63-70 (PSTPPKTT). Asn91 and Asn164 each carry an N-linked (GlcNAc...) asparagine glycan. The region spanning 141–324 (CYCTGWGDPH…VNDPSKPHCP (184 aa)) is the VWFD domain. Intrachain disulfides connect Cys143–Cys284, Cys165–Cys323, and Cys189–Cys197. The probably important for disulfide-bond mediated mucin polymerization (link domain) stretch occupies residues 149–837 (PHFVTFDGLY…RSSPRLLGRK (689 aa)). 12 N-linked (GlcNAc...) asparagine glycosylation sites follow: Asn278, Asn289, Asn344, Asn410, Asn444, Asn515, Asn538, Asn612, Asn627, Asn695, Asn727, and Asn749. VWFC domains lie at 472–543 (CGCV…TSCK) and 581–648 (GVCV…KKCQ). Cystine bridges form between Cys732/Cys779, Cys746/Cys793, Cys755/Cys809, and Cys759/Cys811. The 86-residue stretch at 732-817 (CSAIPVMKEI…SCLCQGTVCE (86 aa)) folds into the CTCK domain.

Multimeric. Coats the epithelia of the intestines.

The protein resides in the secreted. The protein is Intestinal mucin-like protein of Rattus norvegicus (Rat).